A 215-amino-acid chain; its full sequence is Sodium channel regulatory subunit beta-3 (215 aa).

A signal peptide spans 1-22; sequence MPAFNRLFPLVSLVLIYWASVC. Residues 23-156 are Extracellular-facing; sequence FPVCVEVPSE…EEAGEDFTSV (134 aa). The Ig-like C2-type domain maps to 24–138; it reads PVCVEVPSET…EAHRPFVKTT (115 aa). 2 disulfides stabilise this stretch: cysteine 26–cysteine 48 and cysteine 45–cysteine 120. N-linked (GlcNAc...) asparagine glycosylation is found at asparagine 95, asparagine 109, asparagine 113, and asparagine 121. A helical membrane pass occupies residues 157–178; sequence VSEIMMYILLVFLTLWLLIEMI. Over 179-215 the chain is Cytoplasmic; sequence YCYRKVSKAEEAAQENASDYLAIPSENKENSAVPVEE.

The protein belongs to the sodium channel auxiliary subunit SCN3B (TC 8.A.17) family. A voltage-gated sodium (Nav) channel consists of an ion-conducting pore-forming alpha subunit functional on its own that is regulated by one or more beta subunits. Forms homodimers and homotrimers. SCN3B is non-covalently associated with alpha subunits and induces the formation of alpha subunit oligomers, including trimers. Interacts with SCN5A/Nav1.5; regulatory subunit of SCN5A/Nav1.5. Interacts with SCN7A/Nav2.1; probable regulatory subunit of SCN7A/Nav2.1. Interacts with SCN10A; regulatory subunit of SCN10A/Nav1.8. Interacts with NFASC; probably involved in targeting the sodium channels to the nodes of Ranvier. Post-translationally, intramolecular disulfide bonds favor the voltage-gated sodium channel oligomeric complex assembly. N-glycosylated.

It localises to the cell membrane. Its function is as follows. Regulatory subunit of multiple voltage-gated sodium (Nav) channels directly mediating the depolarization of excitable membranes. Navs, also called VGSCs (voltage-gated sodium channels) or VDSCs (voltage-dependent sodium channels), operate by switching between closed and open conformations depending on the voltage difference across the membrane. In the open conformation they allow Na(+) ions to selectively pass through the pore, along their electrochemical gradient. The influx of Na+ ions provokes membrane depolarization, initiating the propagation of electrical signals throughout cells and tissues. The accessory beta subunits participate in localization and functional modulation of the Nav channels. Modulates the activity of SCN2A/Nav1.2, causing a hyperpolarizing shift in the voltage-dependence of inactivation of the channel and increasing the fraction of channels operating in the fast gating mode. Modulates the activity of SCN5A/Nav1.5. Could also regulate the atypical sodium channel SCN7A/Nav2.1. Modulates the activity of SCN10A/Nav1.8, regulating its oligomerization and accelerating the recovery from inactivation. The polypeptide is Sodium channel regulatory subunit beta-3 (Macaca fascicularis (Crab-eating macaque)).